The primary structure comprises 437 residues: Trigger factor (437 aa).

Residues Asp-161–Pro-246 enclose the PPIase FKBP-type domain.

It belongs to the FKBP-type PPIase family. Tig subfamily.

It is found in the cytoplasm. The catalysed reaction is [protein]-peptidylproline (omega=180) = [protein]-peptidylproline (omega=0). Involved in protein export. Acts as a chaperone by maintaining the newly synthesized protein in an open conformation. Functions as a peptidyl-prolyl cis-trans isomerase. The chain is Trigger factor from Pseudomonas putida (strain GB-1).